The sequence spans 349 residues: Decapping nuclease RAI1 (349 aa).

Glu-157 serves as a coordination point for a divalent metal cation. Glu-205 contacts substrate. Positions 207, 222, and 223 each coordinate a divalent metal cation. Substrate contacts are provided by Lys-224 and Gln-248.

Belongs to the DXO/Dom3Z family. Interacts with RAT1; the interaction is direct, stabilizes RAT1 protein structure and stimulates its exoribonuclease activity. The interaction also stimulates RAI1 pyrophosphohydrolase activity, probably by recruiting it to mRNA substrates. It depends on a divalent metal cation as a cofactor.

It is found in the nucleus. It carries out the reaction a 5'-end NAD(+)-phospho-ribonucleoside in mRNA + H2O = a 5'-end phospho-ribonucleoside in mRNA + NAD(+) + H(+). The enzyme catalyses a 5'-end (N(7)-methyl 5'-triphosphoguanosine)-ribonucleoside-ribonucleotide in mRNA + H2O = a (N(7)-methyl 5'-triphosphoguanosine)-nucleoside + a 5'-end phospho-ribonucleoside in mRNA + H(+). It catalyses the reaction a 5'-end triphospho-ribonucleoside in mRNA + H2O = a 5'-end phospho-ribonucleoside in mRNA + diphosphate + H(+). In terms of biological role, decapping enzyme for NAD-capped RNAs: specifically hydrolyzes the nicotinamide adenine dinucleotide (NAD) cap from a subset of RNAs by removing the entire NAD moiety from the 5'-end of an NAD-capped RNA. The NAD-cap is present at the 5'-end of some RNAs and snoRNAs. In contrast to the canonical 5'-end N7 methylguanosine (m7G) cap, the NAD cap promotes mRNA decay. Also acts as a non-canonical decapping enzyme that removes the entire cap structure of m7G capped or incompletely capped RNAs. Has decapping activity toward incomplete 5'-end m7G cap mRNAs such as unmethylated 5'-end-capped RNA (cap0), while it has no activity toward 2'-O-ribose methylated m7G cap (cap1). Also possesses RNA 5'-pyrophosphohydrolase activity by hydrolyzing the 5'-end triphosphate to release pyrophosphates. Stimulates exoribonuclease activity of Rat1, allowing it to degrade RNAs with stable secondary structure more effectively. The sequence is that of Decapping nuclease RAI1 (RAI1) from Yarrowia lipolytica (strain CLIB 122 / E 150) (Yeast).